Here is a 570-residue protein sequence, read N- to C-terminus: Acetolactate synthase (570 aa).

Residue Glu60 coordinates thiamine diphosphate. Residues Gln162, 266–287, and 308–327 contribute to the FAD site; these read FRNQPGDLLLEQADVVLTIGYD and DEIIADIDHAYQPDLELIGD. Residues 399 to 479 form a thiamine pyrophosphate binding region; that stretch reads SHAIWMSRYF…IVHIVWNDST (81 aa). Position 450 (Asp450) interacts with Mg(2+).

Belongs to the TPP enzyme family. Mg(2+) is required as a cofactor. The cofactor is thiamine diphosphate.

It carries out the reaction 2 pyruvate + H(+) = (2S)-2-acetolactate + CO2. Its pathway is polyol metabolism; (R,R)-butane-2,3-diol biosynthesis; (R,R)-butane-2,3-diol from pyruvate: step 1/3. This Bacillus subtilis (strain 168) protein is Acetolactate synthase (alsS).